Consider the following 130-residue polypeptide: Glycoprotein hormone beta-5 (130 aa).

Residues 1–24 (MKLVYLVLGAVALLLLGGPDSVLS) form the signal peptide. Disulfide bonds link C36-C84, C50-C99, C60-C115, C64-C117, and C120-C127. N87 carries an N-linked (GlcNAc...) asparagine glycan.

This sequence belongs to the glycoprotein hormones subunit beta family. Heterodimer with GPHA2; this heterodimer interacts with thyroid-stimulating hormone receptor (TSHR), and hence stimulates cAMP production. N-glycosylated. As to expression, expressed in the anterior lobe of pituitary.

The protein resides in the secreted. Functions as a heterodimeric glycoprotein hormone with GPHA2 able to bind and activate the thyroid-stimulating hormone receptor (TSHR), leading to increased cAMP production. Plays a central role in controlling thyroid cell metabolism. The sequence is that of Glycoprotein hormone beta-5 (Gphb5) from Mus musculus (Mouse).